The sequence spans 489 residues: Glycogen synthase (489 aa).

Lys-15 contacts ADP-alpha-D-glucose.

Belongs to the glycosyltransferase 1 family. Bacterial/plant glycogen synthase subfamily.

It carries out the reaction [(1-&gt;4)-alpha-D-glucosyl](n) + ADP-alpha-D-glucose = [(1-&gt;4)-alpha-D-glucosyl](n+1) + ADP + H(+). It functions in the pathway glycan biosynthesis; glycogen biosynthesis. Functionally, synthesizes alpha-1,4-glucan chains using ADP-glucose. This Francisella tularensis subsp. holarctica (strain FTNF002-00 / FTA) protein is Glycogen synthase.